We begin with the raw amino-acid sequence, 419 residues long: UDP-N-acetylglucosamine 1-carboxyvinyltransferase (419 aa).

22–23 is a phosphoenolpyruvate binding site; that stretch reads KN. Position 93 (Arg-93) interacts with UDP-N-acetyl-alpha-D-glucosamine. Cys-117 functions as the Proton donor in the catalytic mechanism. Cys-117 is modified (2-(S-cysteinyl)pyruvic acid O-phosphothioketal). Residues Asp-306 and Ile-328 each coordinate UDP-N-acetyl-alpha-D-glucosamine.

It belongs to the EPSP synthase family. MurA subfamily.

It is found in the cytoplasm. The enzyme catalyses phosphoenolpyruvate + UDP-N-acetyl-alpha-D-glucosamine = UDP-N-acetyl-3-O-(1-carboxyvinyl)-alpha-D-glucosamine + phosphate. Its pathway is cell wall biogenesis; peptidoglycan biosynthesis. In terms of biological role, cell wall formation. Adds enolpyruvyl to UDP-N-acetylglucosamine. The polypeptide is UDP-N-acetylglucosamine 1-carboxyvinyltransferase (Idiomarina loihiensis (strain ATCC BAA-735 / DSM 15497 / L2-TR)).